A 692-amino-acid polypeptide reads, in one-letter code: Elongation factor G (692 aa).

In terms of domain architecture, tr-type G spans Glu-8–Thr-282. GTP is bound by residues Ala-17–Thr-24, Asp-81–His-85, and Asn-135–Asp-138. Phosphoserine occurs at positions 213, 302, 569, and 680.

The protein belongs to the TRAFAC class translation factor GTPase superfamily. Classic translation factor GTPase family. EF-G/EF-2 subfamily. Phosphorylated on threonine residue(s). Phosphorylated by PrkC and dephosphorylated by PrpC, in vitro.

It is found in the cytoplasm. Catalyzes the GTP-dependent ribosomal translocation step during translation elongation. During this step, the ribosome changes from the pre-translocational (PRE) to the post-translocational (POST) state as the newly formed A-site-bound peptidyl-tRNA and P-site-bound deacylated tRNA move to the P and E sites, respectively. Catalyzes the coordinated movement of the two tRNA molecules, the mRNA and conformational changes in the ribosome. The sequence is that of Elongation factor G (fusA) from Bacillus subtilis (strain 168).